Reading from the N-terminus, the 351-residue chain is uncharacterized protein (351 aa).

The protein belongs to the bacterial luciferase oxidoreductase family.

This is an uncharacterized protein from Sinorhizobium fredii (strain NBRC 101917 / NGR234).